Consider the following 78-residue polypeptide: Probable [Fe-S]-dependent transcriptional repressor (78 aa).

C56, C61, C64, and C70 together coordinate iron-sulfur cluster.

Belongs to the FeoC family.

Functionally, may function as a transcriptional regulator that controls feoABC expression. The chain is Probable [Fe-S]-dependent transcriptional repressor from Escherichia coli (strain UTI89 / UPEC).